The following is a 232-amino-acid chain: Probable ADP-ribosylation factor GTPase-activating protein AGD15 (232 aa).

In terms of domain architecture, Arf-GAP spans 16–130 (SKILEALLKH…RWVSPGAIQP (115 aa)). The segment at 31 to 54 (CADCRSKAPRWASVNLGIFICMQC) adopts a C4-type zinc-finger fold. The disordered stretch occupies residues 203–232 (PNQKNENFSSEVNQNRRTTIAPPSSWATFD). A compositionally biased stretch (polar residues) spans 206-232 (KNENFSSEVNQNRRTTIAPPSSWATFD).

In terms of biological role, GTPase-activating protein (GAP) for ADP ribosylation factor (ARF). This Arabidopsis thaliana (Mouse-ear cress) protein is Probable ADP-ribosylation factor GTPase-activating protein AGD15 (AGD15).